The primary structure comprises 888 residues: Valine--tRNA ligase (888 aa).

The 'HIGH' region signature appears at 43 to 53; sequence PNVTGTLHLGH. The 'KMSKS' region motif lies at 538–542; it reads KMSKS. Position 541 (K541) interacts with ATP. Positions 821-888 form a coiled coil; the sequence is LIDLDAERAR…RLKAALGRLA (68 aa).

Belongs to the class-I aminoacyl-tRNA synthetase family. ValS type 1 subfamily. As to quaternary structure, monomer.

The protein localises to the cytoplasm. The enzyme catalyses tRNA(Val) + L-valine + ATP = L-valyl-tRNA(Val) + AMP + diphosphate. Catalyzes the attachment of valine to tRNA(Val). As ValRS can inadvertently accommodate and process structurally similar amino acids such as threonine, to avoid such errors, it has a 'posttransfer' editing activity that hydrolyzes mischarged Thr-tRNA(Val) in a tRNA-dependent manner. This is Valine--tRNA ligase from Gluconobacter oxydans (strain 621H) (Gluconobacter suboxydans).